Reading from the N-terminus, the 330-residue chain is D-cysteine desulfhydrase (330 aa).

Residue lysine 52 is modified to N6-(pyridoxal phosphate)lysine.

The protein belongs to the ACC deaminase/D-cysteine desulfhydrase family. Homodimer. It depends on pyridoxal 5'-phosphate as a cofactor.

It catalyses the reaction D-cysteine + H2O = hydrogen sulfide + pyruvate + NH4(+) + H(+). In terms of biological role, catalyzes the alpha,beta-elimination reaction of D-cysteine and of several D-cysteine derivatives. It could be a defense mechanism against D-cysteine. This chain is D-cysteine desulfhydrase, found in Yersinia pseudotuberculosis serotype O:1b (strain IP 31758).